The following is an 87-amino-acid chain: Small ribosomal subunit protein bS20 (87 aa).

The protein belongs to the bacterial ribosomal protein bS20 family.

Binds directly to 16S ribosomal RNA. This chain is Small ribosomal subunit protein bS20, found in Beijerinckia indica subsp. indica (strain ATCC 9039 / DSM 1715 / NCIMB 8712).